The following is a 452-amino-acid chain: Bifunctional F420 biosynthesis protein FbiB (452 aa).

A coenzyme F420:L-glutamate ligase region spans residues 1 to 248 (MVSAPGDHAG…AGEEDLFWLG (248 aa)). Residues 24-27 (LPEF), serine 54, and lysine 59 each bind GTP. Aspartate 113 lines the a divalent metal cation pocket. Position 116 (asparagine 116) interacts with GTP. A divalent metal cation is bound by residues aspartate 154 and threonine 155. The dehydro-coenzyme F420-0 reductase stretch occupies residues 249-452 (TAEAVERGRR…RDPGDGLVER (204 aa)). FMN-binding positions include 264 to 268 (RRSVR) and alanine 292. A coenzyme F420-(gamma-Glu)n-binding site is contributed by aspartate 324. The FMN site is built by glycine 403 and arginine 440.

In the N-terminal section; belongs to the CofE family. Mg(2+) serves as cofactor. Requires Mn(2+) as cofactor. It depends on K(+) as a cofactor.

The catalysed reaction is oxidized coenzyme F420-0 + GTP + L-glutamate = oxidized coenzyme F420-1 + GDP + phosphate + H(+). It catalyses the reaction oxidized coenzyme F420-0 + FMN + H(+) = dehydro coenzyme F420-0 + FMNH2. It carries out the reaction oxidized coenzyme F420-1 + GTP + L-glutamate = oxidized coenzyme F420-2 + GDP + phosphate + H(+). The protein operates within cofactor biosynthesis; coenzyme F420 biosynthesis. Its function is as follows. Bifunctional enzyme that catalyzes the GTP-dependent successive addition of two or more gamma-linked L-glutamates to the L-lactyl phosphodiester of 7,8-didemethyl-8-hydroxy-5-deazariboflavin (F420-0) to form polyglutamated F420 derivatives, and the FMNH2-dependent reduction of dehydro-F420-0 to form F420-0. In Nocardia farcinica (strain IFM 10152), this protein is Bifunctional F420 biosynthesis protein FbiB.